The chain runs to 240 residues: Adenosylcobinamide-GDP ribazoletransferase (240 aa).

A run of 5 helical transmembrane segments spans residues 31–51 (LLYYPLVGLLFGLLLWLASHL), 57–77 (APLHAALLLTAWVLLSGALHL), 109–129 (IAVVTLVLVLLLKFCALWVLV), 133–153 (VGAQLLLAPLIGRTAMLGLFL), and 185–205 (LFCLLLGGWVVLLAVAVFAWL).

This sequence belongs to the CobS family. Mg(2+) serves as cofactor.

It is found in the cell inner membrane. It catalyses the reaction alpha-ribazole + adenosylcob(III)inamide-GDP = adenosylcob(III)alamin + GMP + H(+). The catalysed reaction is alpha-ribazole 5'-phosphate + adenosylcob(III)inamide-GDP = adenosylcob(III)alamin 5'-phosphate + GMP + H(+). Its pathway is cofactor biosynthesis; adenosylcobalamin biosynthesis; adenosylcobalamin from cob(II)yrinate a,c-diamide: step 7/7. Joins adenosylcobinamide-GDP and alpha-ribazole to generate adenosylcobalamin (Ado-cobalamin). Also synthesizes adenosylcobalamin 5'-phosphate from adenosylcobinamide-GDP and alpha-ribazole 5'-phosphate. The sequence is that of Adenosylcobinamide-GDP ribazoletransferase from Pseudomonas putida (strain GB-1).